The sequence spans 488 residues: Glutamyl-tRNA(Gln) amidotransferase subunit A (488 aa).

Active-site charge relay system residues include lysine 77 and serine 152. Serine 176 serves as the catalytic Acyl-ester intermediate.

The protein belongs to the amidase family. GatA subfamily. As to quaternary structure, heterotrimer of A, B and C subunits.

The enzyme catalyses L-glutamyl-tRNA(Gln) + L-glutamine + ATP + H2O = L-glutaminyl-tRNA(Gln) + L-glutamate + ADP + phosphate + H(+). Its function is as follows. Allows the formation of correctly charged Gln-tRNA(Gln) through the transamidation of misacylated Glu-tRNA(Gln) in organisms which lack glutaminyl-tRNA synthetase. The reaction takes place in the presence of glutamine and ATP through an activated gamma-phospho-Glu-tRNA(Gln). This Streptococcus pyogenes serotype M2 (strain MGAS10270) protein is Glutamyl-tRNA(Gln) amidotransferase subunit A.